A 197-amino-acid polypeptide reads, in one-letter code: 7-methyl-GTP pyrophosphatase (197 aa).

The Proton acceptor role is filled by D69.

It belongs to the Maf family. YceF subfamily. A divalent metal cation is required as a cofactor.

Its subcellular location is the cytoplasm. The catalysed reaction is N(7)-methyl-GTP + H2O = N(7)-methyl-GMP + diphosphate + H(+). In terms of biological role, nucleoside triphosphate pyrophosphatase that hydrolyzes 7-methyl-GTP (m(7)GTP). May have a dual role in cell division arrest and in preventing the incorporation of modified nucleotides into cellular nucleic acids. This is 7-methyl-GTP pyrophosphatase from Syntrophotalea carbinolica (strain DSM 2380 / NBRC 103641 / GraBd1) (Pelobacter carbinolicus).